We begin with the raw amino-acid sequence, 591 residues long: L-fucose isomerase (591 aa).

Catalysis depends on proton acceptor residues E337 and D361. Positions 337, 361, and 528 each coordinate Mn(2+).

It belongs to the L-fucose isomerase family. Homohexamer. Requires Mn(2+) as cofactor.

It localises to the cytoplasm. The catalysed reaction is L-fucose = L-fuculose. The protein operates within carbohydrate degradation; L-fucose degradation; L-lactaldehyde and glycerone phosphate from L-fucose: step 1/3. Its function is as follows. Converts the aldose L-fucose into the corresponding ketose L-fuculose. The chain is L-fucose isomerase from Shigella dysenteriae serotype 1 (strain Sd197).